Reading from the N-terminus, the 649-residue chain is Acetyl-coenzyme A synthetase (649 aa).

Residues 191–194 (RGGR), Thr309, and Asn333 each bind CoA. ATP contacts are provided by residues 385-387 (GEP), 409-414 (DTWWQT), Asp498, and Arg513. Position 521 (Ser521) interacts with CoA. Arg524 contributes to the ATP binding site. Mg(2+) is bound by residues Val535, His537, and Val540. Arg582 contacts CoA. An N6-acetyllysine modification is found at Lys607.

The protein belongs to the ATP-dependent AMP-binding enzyme family. Requires Mg(2+) as cofactor. In terms of processing, acetylated. Deacetylation by the SIR2-homolog deacetylase activates the enzyme.

It catalyses the reaction acetate + ATP + CoA = acetyl-CoA + AMP + diphosphate. Catalyzes the conversion of acetate into acetyl-CoA (AcCoA), an essential intermediate at the junction of anabolic and catabolic pathways. AcsA undergoes a two-step reaction. In the first half reaction, AcsA combines acetate with ATP to form acetyl-adenylate (AcAMP) intermediate. In the second half reaction, it can then transfer the acetyl group from AcAMP to the sulfhydryl group of CoA, forming the product AcCoA. This Novosphingobium aromaticivorans (strain ATCC 700278 / DSM 12444 / CCUG 56034 / CIP 105152 / NBRC 16084 / F199) protein is Acetyl-coenzyme A synthetase.